The chain runs to 570 residues: Urease subunit alpha (570 aa).

The Urease domain occupies 135-570; it reads GGLDIHVHFN…ELPLAQRYHL (436 aa). 3 residues coordinate Ni(2+): histidine 140, histidine 142, and lysine 219. At lysine 219 the chain carries N6-carboxylysine. Residue histidine 221 participates in substrate binding. The Ni(2+) site is built by histidine 248 and histidine 274. The active-site Proton donor is the histidine 322. Aspartate 362 serves as a coordination point for Ni(2+).

This sequence belongs to the metallo-dependent hydrolases superfamily. Urease alpha subunit family. In terms of assembly, heterotrimer of UreA (gamma), UreB (beta) and UreC (alpha) subunits. Three heterotrimers associate to form the active enzyme. Ni cation serves as cofactor. Post-translationally, carboxylation allows a single lysine to coordinate two nickel ions.

It localises to the cytoplasm. It catalyses the reaction urea + 2 H2O + H(+) = hydrogencarbonate + 2 NH4(+). Its pathway is nitrogen metabolism; urea degradation; CO(2) and NH(3) from urea (urease route): step 1/1. In Natronomonas pharaonis (strain ATCC 35678 / DSM 2160 / CIP 103997 / JCM 8858 / NBRC 14720 / NCIMB 2260 / Gabara) (Halobacterium pharaonis), this protein is Urease subunit alpha.